Reading from the N-terminus, the 1159-residue chain is Anillin-like protein 1 (1159 aa).

Disordered stretches follow at residues 43-81 (VASP…MKEN), 266-327 (QQVS…TKTT), 409-430 (KLKK…APVP), 549-608 (AIPK…GDVI), and 629-699 (FGFM…KSSS). Residues 50–60 (FGSSSKCNDGP) show a composition bias toward polar residues. Over residues 287–327 (ASSATSSSSSTTTLTTISGASGSTTSGISNAPQDSASTKTT) the composition is skewed to low complexity. Residues 421–430 (PPAPTSAPVP) show a composition bias toward pro residues. The segment covering 564-584 (SASSLYSQGARSNTASPASKS) has biased composition (polar residues). Acidic residues predominate over residues 660 to 684 (VIEEETENEDESEPYEPEEEEDDDA). A PH domain is found at 1029–1147 (DITYHGFLSM…WLSLINSTSK (119 aa)).

Strongly expressed in dividing neuroblasts under the ventral epidermal cells during ventral enclosure.

It localises to the cytoplasm. The protein localises to the cell cortex. Its subcellular location is the cytoskeleton. The protein resides in the spindle. It is found in the midbody. It localises to the cleavage furrow. Required for contractile events in embryos that occur prior to mitosis, such as cortical ruffling and pseudocleavage. Promotes membrane ruffling by organizing cortical patches of septins and myosin II. Not generally required for cytokinesis in mitotic cells. Required for the asymmetric cleavage events that extrude the two polar bodies during oocyte meiosis. Not required for meiotic contractile ring assembly, initiation or closure but is required for the transformation of the contractile ring from a disk above the spindle to a tube around the spindle midzone. Promotes astral microtubule-directed cortical myosin polarization and cleavage furrow ingression. Regulates neuroblast cytokinesis during mid- to late-embryogenesis and is required for ventral enclosure. This is Anillin-like protein 1 (ani-1) from Caenorhabditis elegans.